Consider the following 477-residue polypeptide: Argininosuccinate lyase (477 aa).

Belongs to the lyase 1 family. Argininosuccinate lyase subfamily.

It is found in the cytoplasm. The catalysed reaction is 2-(N(omega)-L-arginino)succinate = fumarate + L-arginine. Its pathway is amino-acid biosynthesis; L-arginine biosynthesis; L-arginine from L-ornithine and carbamoyl phosphate: step 3/3. In Corynebacterium glutamicum (strain R), this protein is Argininosuccinate lyase.